Reading from the N-terminus, the 299-residue chain is Acetylglutamate kinase (299 aa).

Residues 72–73 (GG), R94, and N196 each bind substrate.

Belongs to the acetylglutamate kinase family. ArgB subfamily.

Its subcellular location is the cytoplasm. It catalyses the reaction N-acetyl-L-glutamate + ATP = N-acetyl-L-glutamyl 5-phosphate + ADP. It functions in the pathway amino-acid biosynthesis; L-arginine biosynthesis; N(2)-acetyl-L-ornithine from L-glutamate: step 2/4. Functionally, catalyzes the ATP-dependent phosphorylation of N-acetyl-L-glutamate. The protein is Acetylglutamate kinase of Paraburkholderia phymatum (strain DSM 17167 / CIP 108236 / LMG 21445 / STM815) (Burkholderia phymatum).